Reading from the N-terminus, the 521-residue chain is GMP synthase [glutamine-hydrolyzing] (521 aa).

One can recognise a Glutamine amidotransferase type-1 domain in the interval 5–203 (KILILDFGSQ…VHEICGCGRD (199 aa)). Cys82 serves as the catalytic Nucleophile. Catalysis depends on residues His177 and Glu179. The GMPS ATP-PPase domain occupies 204–396 (WNMPDYVNEA…LGLPHEMVYR (193 aa)). 231-237 (SGGVDSS) lines the ATP pocket.

In terms of assembly, homodimer.

It catalyses the reaction XMP + L-glutamine + ATP + H2O = GMP + L-glutamate + AMP + diphosphate + 2 H(+). It functions in the pathway purine metabolism; GMP biosynthesis; GMP from XMP (L-Gln route): step 1/1. Catalyzes the synthesis of GMP from XMP. In Aromatoleum aromaticum (strain DSM 19018 / LMG 30748 / EbN1) (Azoarcus sp. (strain EbN1)), this protein is GMP synthase [glutamine-hydrolyzing].